The sequence spans 208 residues: Redox-sensing transcriptional repressor Rex 1 (208 aa).

Positions S15–F54 form a DNA-binding region, H-T-H motif. G89 to G94 contacts NAD(+).

The protein belongs to the transcriptional regulatory Rex family. In terms of assembly, homodimer.

It localises to the cytoplasm. Its function is as follows. Modulates transcription in response to changes in cellular NADH/NAD(+) redox state. The sequence is that of Redox-sensing transcriptional repressor Rex 1 from Thermotoga maritima (strain ATCC 43589 / DSM 3109 / JCM 10099 / NBRC 100826 / MSB8).